The following is a 144-amino-acid chain: UPF0225 protein RSc0270 (144 aa).

It belongs to the UPF0225 family.

This chain is UPF0225 protein RSc0270, found in Ralstonia nicotianae (strain ATCC BAA-1114 / GMI1000) (Ralstonia solanacearum).